The chain runs to 423 residues: Glutaminase (423 aa).

The interval 27–312 (GEVAQYIPQL…LSEDMGLHLM (286 aa)) is glutaminase. Substrate contacts are provided by serine 69, asparagine 119, glutamate 165, asparagine 172, tyrosine 196, tyrosine 248, and valine 266. Residues 321–423 (AVRAIEERGD…SPQVDDPEEL (103 aa)) form the STAS domain.

It belongs to the glutaminase family. As to quaternary structure, homotetramer.

The enzyme catalyses L-glutamine + H2O = L-glutamate + NH4(+). This chain is Glutaminase (glsA), found in Corynebacterium efficiens (strain DSM 44549 / YS-314 / AJ 12310 / JCM 11189 / NBRC 100395).